The sequence spans 174 residues: Shikimate kinase 2 (174 aa).

12-17 (GCGKTT) provides a ligand contact to ATP. The Mg(2+) site is built by T16 and D32. Positions 34, 58, and 79 each coordinate substrate. An LID domain region spans residues 112-126 (QAAPEEDLRPTLTGK). R120 lines the ATP pocket. Residue R139 participates in substrate binding.

The protein belongs to the shikimate kinase family. AroL subfamily. As to quaternary structure, monomer. The cofactor is Mg(2+).

Its subcellular location is the cytoplasm. It carries out the reaction shikimate + ATP = 3-phosphoshikimate + ADP + H(+). It functions in the pathway metabolic intermediate biosynthesis; chorismate biosynthesis; chorismate from D-erythrose 4-phosphate and phosphoenolpyruvate: step 5/7. In terms of biological role, catalyzes the specific phosphorylation of the 3-hydroxyl group of shikimic acid using ATP as a cosubstrate. The chain is Shikimate kinase 2 from Shigella boydii serotype 18 (strain CDC 3083-94 / BS512).